The primary structure comprises 1224 residues: Coatomer subunit alpha (1224 aa).

WD repeat units lie at residues 3–38, 42–80, 84–122, and 126–164; these read TKFETKSARVKGLSFHPKRPWILTSLHNGVIQLWDY, TLIDKFDEHDGPVRGIDFHKQQPLFVSGGDDYKIKVWNY, RCLFTLLGHLDYIRTTFFHHEYPWILSASDDQTIRVWNW, and TCVCVLTGHNHYVMCAQFHPTEDLVVSASLDQTVRVWDI. The residue at position 173 (S173) is a Phosphoserine. Phosphothreonine is present on T185. WD repeat units lie at residues 195–234, 241–278, and 282–319; these read AVVKHVLEGHDRGVNWAAFHPTMPLIVSGADDRQVKIWRM, EVDTCRGHYNNVSCAVFHPRQELILSNSEDKSIRVWDM, and TGVQTFRRDHDRFWVLAAHPNLNLFAAGHDGGMIVFKL. Residue S402 is modified to Phosphoserine. T591 carries the phosphothreonine modification. Phosphoserine is present on S895. The residue at position 965 (R965) is an Omega-N-methylarginine. S1193 is modified (phosphoserine).

Oligomeric complex that consists of at least the alpha, beta, beta', gamma, delta, epsilon and zeta subunits. Interacts with SCYL1. Interacts with JAGN1. Interacts with TMEM41B. Interacts with SVEP1. Probably interacts with PEX11A. Uniformly expressed in a wide range of adult and fetal tissues. Xenin is found in gastric, duodenal and jejunal mucosa. Circulates in the blood. Seems to be confined to specific endocrine cells.

It is found in the cytoplasm. It localises to the golgi apparatus membrane. The protein localises to the cytoplasmic vesicle. The protein resides in the COPI-coated vesicle membrane. Its subcellular location is the secreted. The coatomer is a cytosolic protein complex that binds to dilysine motifs and reversibly associates with Golgi non-clathrin-coated vesicles, which further mediate biosynthetic protein transport from the ER, via the Golgi up to the trans Golgi network. Coatomer complex is required for budding from Golgi membranes, and is essential for the retrograde Golgi-to-ER transport of dilysine-tagged proteins. In mammals, the coatomer can only be recruited by membranes associated to ADP-ribosylation factors (ARFs), which are small GTP-binding proteins; the complex also influences the Golgi structural integrity, as well as the processing, activity, and endocytic recycling of LDL receptors. Functionally, xenin stimulates exocrine pancreatic secretion. It inhibits pentagastrin-stimulated secretion of acid, to induce exocrine pancreatic secretion and to affect small and large intestinal motility. In the gut, xenin interacts with the neurotensin receptor. The protein is Coatomer subunit alpha (COPA) of Homo sapiens (Human).